The sequence spans 275 residues: Dermonecrotic toxin SpeSicTox-betaIIA2v (275 aa).

His-5 is a catalytic residue. Glu-25 and Asp-27 together coordinate Mg(2+). His-41 serves as the catalytic Nucleophile. 2 cysteine pairs are disulfide-bonded: Cys-45–Cys-51 and Cys-47–Cys-190. Asp-85 serves as a coordination point for Mg(2+).

It belongs to the arthropod phospholipase D family. Class II subfamily. The cofactor is Mg(2+). In terms of tissue distribution, expressed by the venom gland.

The protein resides in the secreted. The enzyme catalyses an N-(acyl)-sphingosylphosphocholine = an N-(acyl)-sphingosyl-1,3-cyclic phosphate + choline. It catalyses the reaction an N-(acyl)-sphingosylphosphoethanolamine = an N-(acyl)-sphingosyl-1,3-cyclic phosphate + ethanolamine. It carries out the reaction a 1-acyl-sn-glycero-3-phosphocholine = a 1-acyl-sn-glycero-2,3-cyclic phosphate + choline. The catalysed reaction is a 1-acyl-sn-glycero-3-phosphoethanolamine = a 1-acyl-sn-glycero-2,3-cyclic phosphate + ethanolamine. In terms of biological role, dermonecrotic toxins cleave the phosphodiester linkage between the phosphate and headgroup of certain phospholipids (sphingolipid and lysolipid substrates), forming an alcohol (often choline) and a cyclic phosphate. This toxin acts on sphingomyelin (SM). It may also act on ceramide phosphoethanolamine (CPE), lysophosphatidylcholine (LPC) and lysophosphatidylethanolamine (LPE), but not on lysophosphatidylserine (LPS), and lysophosphatidylglycerol (LPG). It acts by transphosphatidylation, releasing exclusively cyclic phosphate products as second products. Induces dermonecrosis, hemolysis, increased vascular permeability, edema, inflammatory response, and platelet aggregation. In Sicarius peruensis (Six-eyed sand spider), this protein is Dermonecrotic toxin SpeSicTox-betaIIA2v.